The following is a 212-amino-acid chain: Large ribosomal subunit protein uL3 (212 aa).

Residues 133–152 (RGSMGHGSKYHRRPGSLGAK) form a disordered region.

Belongs to the universal ribosomal protein uL3 family. Part of the 50S ribosomal subunit. Forms a cluster with proteins L14 and L19.

In terms of biological role, one of the primary rRNA binding proteins, it binds directly near the 3'-end of the 23S rRNA, where it nucleates assembly of the 50S subunit. This Syntrophomonas wolfei subsp. wolfei (strain DSM 2245B / Goettingen) protein is Large ribosomal subunit protein uL3.